Here is a 157-residue protein sequence, read N- to C-terminus: MAEGAEHQQKLTEKDKAELPSTIRDLAETLGIPLIDCIIPCNFCGKFLNYLEACEFDYKKLSLIWKDYCVFACCRVCCGATATYEFNQFYEQTVLGRDIELASGLSIFDIDIRCQTCLAFLDIIEKLDCCGRGLPFHKVRNAWKGICRQCKHFYHDW.

2 zinc fingers span residues Cys-41–Cys-77 and Cys-114–Cys-150.

The protein belongs to the papillomaviridae E6 protein family. In terms of assembly, forms homodimers. Interacts with ubiquitin-protein ligase UBE3A/E6-AP; this interaction stimulates UBE3A ubiquitin activity. Interacts with host BAK1.

Its subcellular location is the host cytoplasm. It is found in the host nucleus. Functionally, plays a major role in the induction and maintenance of cellular transformation. E6 associates with host UBE3A/E6-AP ubiquitin-protein ligase and modulates its activity. Protects host keratinocytes from apoptosis by mediating the degradation of host BAK1. May also inhibit host immune response. The polypeptide is Protein E6 (Human papillomavirus type 5b).